The sequence spans 111 residues: Small ribosomal subunit protein bS16 (111 aa).

It belongs to the bacterial ribosomal protein bS16 family.

The sequence is that of Small ribosomal subunit protein bS16 from Rickettsia felis (strain ATCC VR-1525 / URRWXCal2) (Rickettsia azadi).